We begin with the raw amino-acid sequence, 343 residues long: Protein RecA (343 aa).

Residue 66–73 (GPESSGKT) coordinates ATP.

The protein belongs to the RecA family.

The protein localises to the cytoplasm. Can catalyze the hydrolysis of ATP in the presence of single-stranded DNA, the ATP-dependent uptake of single-stranded DNA by duplex DNA, and the ATP-dependent hybridization of homologous single-stranded DNAs. It interacts with LexA causing its activation and leading to its autocatalytic cleavage. This is Protein RecA from Nitrosomonas eutropha (strain DSM 101675 / C91 / Nm57).